Here is a 478-residue protein sequence, read N- to C-terminus: Multidrug resistance outer membrane protein MdtQ (478 aa).

The signal sequence occupies residues 1–21; that stretch reads MNRDSFYPAIACFPLLLMLAG. C22 carries the N-palmitoyl cysteine lipid modification. C22 carries S-diacylglycerol cysteine lipidation.

The protein belongs to the outer membrane factor (OMF) (TC 1.B.17) family.

It is found in the cell outer membrane. Its function is as follows. Could be involved in resistance to puromycin, acriflavine and tetraphenylarsonium chloride. In Escherichia coli O157:H7, this protein is Multidrug resistance outer membrane protein MdtQ (mdtQ).